The sequence spans 769 residues: 5-methyltetrahydropteroyltriglutamate--homocysteine methyltransferase (769 aa).

Residues arginine 16–lysine 19 and lysine 121 each bind 5-methyltetrahydropteroyltri-L-glutamate. The segment at serine 415–threonine 450 is disordered. Over residues leucine 439 to glutamine 449 the composition is skewed to polar residues. L-homocysteine-binding positions include isoleucine 444–serine 446 and glutamate 497. L-methionine is bound by residues isoleucine 444 to serine 446 and glutamate 497. 5-methyltetrahydropteroyltri-L-glutamate-binding positions include arginine 528–cysteine 529 and tryptophan 574. Aspartate 612 serves as a coordination point for L-homocysteine. Aspartate 612 contributes to the L-methionine binding site. Glutamate 618 contributes to the 5-methyltetrahydropteroyltri-L-glutamate binding site. Zn(2+) is bound by residues histidine 654, cysteine 656, and glutamate 678. Histidine 707 serves as the catalytic Proton donor. A Zn(2+)-binding site is contributed by cysteine 739.

This sequence belongs to the vitamin-B12 independent methionine synthase family. Zn(2+) serves as cofactor.

The enzyme catalyses 5-methyltetrahydropteroyltri-L-glutamate + L-homocysteine = tetrahydropteroyltri-L-glutamate + L-methionine. It participates in amino-acid biosynthesis; L-methionine biosynthesis via de novo pathway; L-methionine from L-homocysteine (MetE route): step 1/1. Its function is as follows. Catalyzes the transfer of a methyl group from 5-methyltetrahydrofolate to homocysteine resulting in methionine formation. This chain is 5-methyltetrahydropteroyltriglutamate--homocysteine methyltransferase, found in Salinibacter ruber (strain DSM 13855 / M31).